The following is a 198-amino-acid chain: Holliday junction branch migration complex subunit RuvA (198 aa).

The domain I stretch occupies residues 1–61 (MYEYFEGIIQ…DNDQTLYGFE (61 aa)). The segment at 62–140 (GAADKRTFNQ…TDGQPAAAAI (79 aa)) is domain II. The flexible linker stretch occupies residues 141-145 (APVAS). Positions 146–198 (DVDSELADALAALVALGYPQRTVDGLTDTLKAFSAKTTDAYLREGLRLLSGKA) are domain III.

It belongs to the RuvA family. As to quaternary structure, homotetramer. Forms an RuvA(8)-RuvB(12)-Holliday junction (HJ) complex. HJ DNA is sandwiched between 2 RuvA tetramers; dsDNA enters through RuvA and exits via RuvB. An RuvB hexamer assembles on each DNA strand where it exits the tetramer. Each RuvB hexamer is contacted by two RuvA subunits (via domain III) on 2 adjacent RuvB subunits; this complex drives branch migration. In the full resolvosome a probable DNA-RuvA(4)-RuvB(12)-RuvC(2) complex forms which resolves the HJ.

The protein localises to the cytoplasm. In terms of biological role, the RuvA-RuvB-RuvC complex processes Holliday junction (HJ) DNA during genetic recombination and DNA repair, while the RuvA-RuvB complex plays an important role in the rescue of blocked DNA replication forks via replication fork reversal (RFR). RuvA specifically binds to HJ cruciform DNA, conferring on it an open structure. The RuvB hexamer acts as an ATP-dependent pump, pulling dsDNA into and through the RuvAB complex. HJ branch migration allows RuvC to scan DNA until it finds its consensus sequence, where it cleaves and resolves the cruciform DNA. This Lacticaseibacillus casei (strain BL23) (Lactobacillus casei) protein is Holliday junction branch migration complex subunit RuvA.